A 1568-amino-acid chain; its full sequence is MKKLYLLYLLASFTTVISKEVTGVFNQFNSLIWSYTYRARYEEISTLTAKAQLEWALDGTIASPGDTFTLVMPCVYKFMTYETSVQLTANSIAYATCDFDAGEDTKSFSSLKCTVTDELTEDTSVFGSVILPIAFNVGGSGSKSTITDSKCFSSGYNTVTFFDGNNQLSTTANFLPRRELAFGLVVSQRLSMSLDTMTNFVMSTPCFMGYQSGKLGFTSNDDDFEIDCSSIHVGITNEINDWSMPVSSVPFDHTIRCTSRALYIEFKTIPAGYRPFVDAIVQIPTTEPFFVKYTNEFACVNGIYTSIPFTSFFSQPILYDEALAIGADLVRTTSTVIGSITRTTTLPFISRLQKTKTILVLEPIPTTTVTTSHHGFDTWYYTKKATIGDTATVFIDVPQHTATTLTTYWQESSTATTTYFDDIDLVDTVIVKIPYPNPTIITTQFWSGKYLTTETHKEPPLGTDSVIIKEPHNPTVTTTEFWSESFATTETITNNPEGTDSVIIKEPHNPTVTTTKFWSESFATTETITTGPLGTDSIVIHDPLEESSSSTAIESSDSNISSSAQDSSSSVEQSFTSADETSSIVELSSSSDIPSSSIGLTSSESSTVSSYDSYSSSTSESSIASSYDSYSSSSIESSTLSSSDRYSSSISDTTSFWDSSSSDLESTSITWSSSIDAQSSHLVQSVSNSISTSQEISSSSSEESSTSATDALVSSDASSILSSDTSSYYPSSTISPSDDFPHTIAGESDSQSFSFITSTVEISSDSVSLTSDPASSFDSSSRLNSDSSSSPSTDQRDILTSSSFSTLIKSSESRESSSGTILSEESSDSIPTTFSTRYWSPSGMSSRHYTNSTETSVSDVVSSSVAGDETSESSVSVTSESSESVTSESVASESVTSESVTAVSDISDLYTTSEEVSTSDSNSGMSSPIPSSEQRSSIPIMSSSDESSESRESSIGTILSEESSDSIPTTFSTRYWSPSGMSSRHYTNSTETSVSDVVSSSVAGDETSESSVSVISESSESVTSESVASESVTAVSDISDLYTTSEVVSTSDSKIVPSTSVPSSEQRSSIPIMSSSDESSESRESSSGTILSEENSDSIPTTFSTRYVSVSLTVGELSALPSLPGKLSHLPSSLSETSIGMTKSANLSPQFFSTSVDSALSYWASGSSSADHQSSATCDVSESSVEGNLSAMALGMSNSDDGLSEDTRSSSVAGKEEIELTSTNSVGEITLISYSSSSPTTHDHGRVSKSMGAAPLSSLFSVSVHAPLVTGLSDSDTFPSENSNRSRSFKESTDNTISISRESLGNPYSSISSPSDYDVKSFTTSRELVSSESILPFSDVMDANDMPTSGSNLHSMVFSISVLGEKFNANIEKHKNTNGHYSSMVFTYQSAGLEESDQRIAVTNTKFDQNKIDTTIDSNTFVTSLPFATTLNDQIDQAVPIKIPASSTAGFVSDVLKPDYSKSVQAESVQTDSTTYSEMMSSKRNKNSGFGTSSLNLKPTITVVTKSIDTKVNTMKEGGVSKQVSTTVTEQYDTSTYTPASLLVSDNSGSVSKYSLWMMAFYMLFGLF.

The first 18 residues, 1 to 18, serve as a signal peptide directing secretion; sequence MKKLYLLYLLASFTTVIS. 4 disulfides stabilise this stretch: Cys-74–Cys-151, Cys-97–Cys-113, Cys-206–Cys-299, and Cys-228–Cys-257. ALS repeat units lie at residues 403–434, 441–471, 476–507, and 512–543; these read TTLTTYWQESSTATTTYFDDIDLVDTVIVKIP, ITTQFWSGKYLTTETHKEPPLGTDSVIIKEP, VTTTEFWSESFATTETITNNPEGTDSVIIKEP, and VTTTKFWSESFATTETITTGPLGTDSIVIHDP. Disordered regions lie at residues 546 to 662, 721 to 743, and 767 to 832; these read ESSS…SSSS, LSSDTSSYYPSSTISPSDDFPHT, and VSLT…SIPT. Composition is skewed to low complexity over residues 547 to 662, 721 to 738, 768 to 793, and 801 to 824; these read SSSS…SSSS, LSSDTSSYYPSSTISPSD, SLTSDPASSFDSSSRLNSDSSSSPST, and SSSFSTLIKSSESRESSSGTILSE. A glycan (N-linked (GlcNAc...) asparagine) is linked at Asn-559. A glycan (N-linked (GlcNAc...) asparagine) is linked at Asn-851. Disordered regions lie at residues 860–1030 and 1046–1097; these read VVSS…VASE and EVVS…ENSD. Residues 872 to 904 show a composition bias toward low complexity; the sequence is ESSVSVTSESSESVTSESVASESVTSESVTAVS. Residues 909 to 918 are compositionally biased toward polar residues; it reads LYTTSEEVST. The segment covering 919–945 has biased composition (low complexity); that stretch reads SDSNSGMSSPIPSSEQRSSIPIMSSSD. Over residues 956-992 the composition is skewed to polar residues; sequence GTILSEESSDSIPTTFSTRYWSPSGMSSRHYTNSTET. Asn-988 carries an N-linked (GlcNAc...) asparagine glycan. 2 stretches are compositionally biased toward low complexity: residues 993-1002 and 1009-1030; these read SVSDVVSSSV and ESSVSVISESSESVTSESVASE. Residues 1046-1062 are compositionally biased toward polar residues; it reads EVVSTSDSKIVPSTSVP. Positions 1063–1077 are enriched in low complexity; sequence SSEQRSSIPIMSSSD. An N-linked (GlcNAc...) asparagine glycan is attached at Asn-1188. 2 disordered regions span residues 1194–1220 and 1271–1305; these read LGMSNSDDGLSEDTRSSSVAGKEEIEL and GLSDSDTFPSENSNRSRSFKESTDNTISISRESLG. Polar residues-rich tracts occupy residues 1272 to 1286 and 1294 to 1303; these read LSDSDTFPSENSNRS and DNTISISRES. Asn-1284 is a glycosylation site (N-linked (GlcNAc...) asparagine). Ser-1548 carries GPI-anchor amidated serine lipidation. A propeptide spans 1549–1568 (removed in mature form); the sequence is GSVSKYSLWMMAFYMLFGLF.

This sequence belongs to the ALS family. In terms of processing, the GPI-anchor is attached to the protein in the endoplasmic reticulum and serves to target the protein to the cell surface. There, the glucosamine-inositol phospholipid moiety is cleaved off and the GPI-modified mannoprotein is covalently attached via its lipidless GPI glycan remnant to the 1,6-beta-glucan of the outer cell wall layer.

The protein resides in the cell membrane. It is found in the secreted. The protein localises to the cell wall. In terms of biological role, cell surface adhesion protein which mediates both yeast-to-host tissue adherence and yeast aggregation. Plays an important role in the pathogenesis of C.albicans infections. This is Agglutinin-like protein 7 (ALS7) from Candida albicans (strain SC5314 / ATCC MYA-2876) (Yeast).